The primary structure comprises 334 residues: Putative ankyrin repeat protein RBE_0347 (334 aa).

4 ANK repeats span residues 80 to 90 (EQGINPNIQDS), 91 to 120 (SGNTLLLYACQSSLVEVVQFLLKKGANPNI), 124 to 161 (SDNTPLSKIISNRFIDKTEIYIAKLLLQNGALTELKDF), and 162 to 191 (VGFTPIQSATQYGHTEIVKSLIQNGADINV).

This chain is Putative ankyrin repeat protein RBE_0347, found in Rickettsia bellii (strain RML369-C).